A 104-amino-acid chain; its full sequence is Large ribosomal subunit protein eL31 (104 aa).

The protein belongs to the eukaryotic ribosomal protein eL31 family.

The chain is Large ribosomal subunit protein eL31 (rpl31e) from Aeropyrum pernix (strain ATCC 700893 / DSM 11879 / JCM 9820 / NBRC 100138 / K1).